The primary structure comprises 126 residues: UPF0102 protein gll3754 (126 aa).

Belongs to the UPF0102 family.

In Gloeobacter violaceus (strain ATCC 29082 / PCC 7421), this protein is UPF0102 protein gll3754.